The following is a 374-amino-acid chain: Alanine racemase (374 aa).

The active-site Proton acceptor; specific for D-alanine is Lys44. Residue Lys44 is modified to N6-(pyridoxal phosphate)lysine. Arg139 serves as a coordination point for substrate. Catalysis depends on Tyr269, which acts as the Proton acceptor; specific for L-alanine. Met317 serves as a coordination point for substrate.

The protein belongs to the alanine racemase family. Requires pyridoxal 5'-phosphate as cofactor.

The catalysed reaction is L-alanine = D-alanine. The protein operates within amino-acid biosynthesis; D-alanine biosynthesis; D-alanine from L-alanine: step 1/1. Its function is as follows. Catalyzes the interconversion of L-alanine and D-alanine. May also act on other amino acids. This Bordetella avium (strain 197N) protein is Alanine racemase (alr).